Reading from the N-terminus, the 435-residue chain is NADH-quinone oxidoreductase subunit D (435 aa).

The protein belongs to the complex I 49 kDa subunit family. In terms of assembly, NDH-1 is composed of 14 different subunits. Subunits NuoB, C, D, E, F, and G constitute the peripheral sector of the complex.

The protein localises to the cell inner membrane. The enzyme catalyses a quinone + NADH + 5 H(+)(in) = a quinol + NAD(+) + 4 H(+)(out). In terms of biological role, NDH-1 shuttles electrons from NADH, via FMN and iron-sulfur (Fe-S) centers, to quinones in the respiratory chain. The immediate electron acceptor for the enzyme in this species is believed to be ubiquinone. Couples the redox reaction to proton translocation (for every two electrons transferred, four hydrogen ions are translocated across the cytoplasmic membrane), and thus conserves the redox energy in a proton gradient. The polypeptide is NADH-quinone oxidoreductase subunit D (Xanthomonas axonopodis pv. citri (strain 306)).